The chain runs to 80 residues: Small ribosomal subunit protein bS18A (80 aa).

The protein belongs to the bacterial ribosomal protein bS18 family. Part of the 30S ribosomal subunit. Forms a tight heterodimer with protein bS6.

Its function is as follows. Binds as a heterodimer with protein bS6 to the central domain of the 16S rRNA, where it helps stabilize the platform of the 30S subunit. The sequence is that of Small ribosomal subunit protein bS18A from Rhodococcus jostii (strain RHA1).